A 147-amino-acid chain; its full sequence is Transcriptional regulator MraZ (147 aa).

SpoVT-AbrB domains lie at 5–50 and 79–122; these read AIAL…PLSA and AQEE…SDAG.

The protein belongs to the MraZ family. In terms of assembly, forms oligomers.

It localises to the cytoplasm. It is found in the nucleoid. In Aromatoleum aromaticum (strain DSM 19018 / LMG 30748 / EbN1) (Azoarcus sp. (strain EbN1)), this protein is Transcriptional regulator MraZ.